Reading from the N-terminus, the 159-residue chain is Probable inactive acireductone dioxygenase 2 (159 aa).

This sequence belongs to the acireductone dioxygenase (ARD) family.

Its subcellular location is the cytoplasm. It is found in the nucleus. Functionally, probable inactive acireductone dioxygenase. The polypeptide is Probable inactive acireductone dioxygenase 2 (Caenorhabditis briggsae).